Here is a 282-residue protein sequence, read N- to C-terminus: NH(3)-dependent NAD(+) synthetase (282 aa).

51–58 (GISGGVDS) lines the ATP pocket. Asp-57 is a Mg(2+) binding site. Residue Arg-148 participates in deamido-NAD(+) binding. Residue Thr-168 coordinates ATP. Glu-173 contacts Mg(2+). Deamido-NAD(+) is bound by residues Lys-181 and Asp-188. 2 residues coordinate ATP: Lys-197 and Thr-219. 268 to 269 (HK) serves as a coordination point for deamido-NAD(+).

Belongs to the NAD synthetase family. In terms of assembly, homodimer.

The catalysed reaction is deamido-NAD(+) + NH4(+) + ATP = AMP + diphosphate + NAD(+) + H(+). The protein operates within cofactor biosynthesis; NAD(+) biosynthesis; NAD(+) from deamido-NAD(+) (ammonia route): step 1/1. Functionally, catalyzes the ATP-dependent amidation of deamido-NAD to form NAD. Uses ammonia as a nitrogen source. This Burkholderia cenocepacia (strain ATCC BAA-245 / DSM 16553 / LMG 16656 / NCTC 13227 / J2315 / CF5610) (Burkholderia cepacia (strain J2315)) protein is NH(3)-dependent NAD(+) synthetase.